Here is a 441-residue protein sequence, read N- to C-terminus: Eukaryotic translation initiation factor 3 subunit M (441 aa).

A PCI domain is found at 196 to 365 (ESEQAYTYLL…QTFLIHRSTY (170 aa)). Basic and acidic residues predominate over residues 405-418 (KEEEANKADNKYDS). A disordered region spans residues 405-441 (KEEEANKADNKYDSARGFQRGGQRKQPRALDDDMGLE).

This sequence belongs to the eIF-3 subunit M family. Component of the eukaryotic translation initiation factor 3 (eIF-3) complex.

The protein resides in the cytoplasm. Functionally, component of the eukaryotic translation initiation factor 3 (eIF-3) complex, which is involved in protein synthesis of a specialized repertoire of mRNAs and, together with other initiation factors, stimulates binding of mRNA and methionyl-tRNAi to the 40S ribosome. The eIF-3 complex specifically targets and initiates translation of a subset of mRNAs involved in cell proliferation. This chain is Eukaryotic translation initiation factor 3 subunit M, found in Phaeosphaeria nodorum (strain SN15 / ATCC MYA-4574 / FGSC 10173) (Glume blotch fungus).